The following is a 216-amino-acid chain: Adenylate kinase (216 aa).

Residue 10–15 coordinates ATP; that stretch reads GAGKGT. The segment at 30–59 is NMP; sequence STGDMFRAAMKNETALGLEAKSYIDKGELV. AMP is bound by residues T31, R36, 57–59, 85–88, and Q92; these read ELV and GFPR. Positions 126–164 are LID; it reads GRFICRTCGATYHKLFNPPKVEGTCDRCGGHEFYQREDD. R127 contributes to the ATP binding site. Zn(2+)-binding residues include C130 and C133. 136-137 is a binding site for ATP; sequence TY. Zn(2+)-binding residues include C150 and C153. Residues R161 and R172 each coordinate AMP. R200 is an ATP binding site.

It belongs to the adenylate kinase family. As to quaternary structure, monomer.

It is found in the cytoplasm. The catalysed reaction is AMP + ATP = 2 ADP. It functions in the pathway purine metabolism; AMP biosynthesis via salvage pathway; AMP from ADP: step 1/1. Functionally, catalyzes the reversible transfer of the terminal phosphate group between ATP and AMP. Plays an important role in cellular energy homeostasis and in adenine nucleotide metabolism. The sequence is that of Adenylate kinase from Enterococcus faecalis (strain ATCC 700802 / V583).